The following is a 425-amino-acid chain: Serine--tRNA ligase (425 aa).

An L-serine-binding site is contributed by 233–235 (TAE). Residue 264–266 (RRE) coordinates ATP. L-serine is bound at residue E287. 351-354 (EISS) lines the ATP pocket. S385 is an L-serine binding site.

The protein belongs to the class-II aminoacyl-tRNA synthetase family. Type-1 seryl-tRNA synthetase subfamily. As to quaternary structure, homodimer. The tRNA molecule binds across the dimer.

The protein resides in the cytoplasm. The enzyme catalyses tRNA(Ser) + L-serine + ATP = L-seryl-tRNA(Ser) + AMP + diphosphate + H(+). It carries out the reaction tRNA(Sec) + L-serine + ATP = L-seryl-tRNA(Sec) + AMP + diphosphate + H(+). Its pathway is aminoacyl-tRNA biosynthesis; selenocysteinyl-tRNA(Sec) biosynthesis; L-seryl-tRNA(Sec) from L-serine and tRNA(Sec): step 1/1. In terms of biological role, catalyzes the attachment of serine to tRNA(Ser). Is also able to aminoacylate tRNA(Sec) with serine, to form the misacylated tRNA L-seryl-tRNA(Sec), which will be further converted into selenocysteinyl-tRNA(Sec). The chain is Serine--tRNA ligase from Prochlorococcus marinus (strain MIT 9215).